The chain runs to 63 residues: Sec-independent protein translocase protein TatA (63 aa).

A helical transmembrane segment spans residues 1–21 (MGSFSMWHWLIVLVIVLLLFG). The segment at 42–63 (GMTDEDAPDTAKTVDHKADETK) is disordered. Residues 53-63 (KTVDHKADETK) are compositionally biased toward basic and acidic residues.

The protein belongs to the TatA/E family. The Tat system comprises two distinct complexes: a TatABC complex, containing multiple copies of TatA, TatB and TatC subunits, and a separate TatA complex, containing only TatA subunits. Substrates initially bind to the TatABC complex, which probably triggers association of the separate TatA complex to form the active translocon.

It localises to the cell inner membrane. Functionally, part of the twin-arginine translocation (Tat) system that transports large folded proteins containing a characteristic twin-arginine motif in their signal peptide across membranes. TatA could form the protein-conducting channel of the Tat system. The polypeptide is Sec-independent protein translocase protein TatA (Rhizobium leguminosarum bv. trifolii (strain WSM2304)).